The chain runs to 169 residues: Ubiquitin-conjugating enzyme E2 2 (169 aa).

One can recognise a UBC core domain in the interval 4-150 (AAKRRLIRDF…VKKTVELSWV (147 aa)). The active-site Glycyl thioester intermediate is the C88.

This sequence belongs to the ubiquitin-conjugating enzyme family.

It localises to the cytoplasm. The protein localises to the nucleus. It catalyses the reaction S-ubiquitinyl-[E1 ubiquitin-activating enzyme]-L-cysteine + [E2 ubiquitin-conjugating enzyme]-L-cysteine = [E1 ubiquitin-activating enzyme]-L-cysteine + S-ubiquitinyl-[E2 ubiquitin-conjugating enzyme]-L-cysteine.. Its pathway is protein modification; protein ubiquitination. Catalyzes the covalent attachment of ubiquitin to other proteins. Plays a role in transcription regulation by catalyzing the monoubiquitination of histone H2B to form H2BK123ub1. H2BK123ub1 gives a specific tag for epigenetic transcriptional activation and is also a prerequisite for H3K4me and H3K79me formation. Also involved in postreplication repair of UV-damaged DNA, in N-end rule-dependent protein degradation and in sporulation. In Cryptococcus neoformans var. neoformans serotype D (strain B-3501A) (Filobasidiella neoformans), this protein is Ubiquitin-conjugating enzyme E2 2 (UBC2).